The following is a 160-amino-acid chain: Negative modulator of initiation of replication (160 aa).

The protein belongs to the SeqA family. In terms of assembly, homodimer. Polymerizes to form helical filaments.

The protein resides in the cytoplasm. Functionally, negative regulator of replication initiation, which contributes to regulation of DNA replication and ensures that replication initiation occurs exactly once per chromosome per cell cycle. Binds to pairs of hemimethylated GATC sequences in the oriC region, thus preventing assembly of replication proteins and re-initiation at newly replicated origins. Repression is relieved when the region becomes fully methylated. This Idiomarina loihiensis (strain ATCC BAA-735 / DSM 15497 / L2-TR) protein is Negative modulator of initiation of replication.